A 1115-amino-acid chain; its full sequence is Eukaryotic translation initiation factor 2-alpha kinase 3 (1115 aa).

An N-terminal signal peptide occupies residues 1-29; the sequence is MERATGPGSLARTLLLPLLLGLVAGTVTA. Over 30-514 the chain is Extracellular; the sequence is RRTSDLLAPT…PNYKNIRKKD (485 aa). The tract at residues 74 to 101 is disordered; that stretch reads SEALPAAAGEQEAREPEPEPEEEPDIRP. An N-linked (GlcNAc...) asparagine glycan is attached at asparagine 259. A helical membrane pass occupies residues 515-535; that stretch reads PVLLLHWWKEIVGTIVFCIVA. The Cytoplasmic segment spans residues 536-1115; sequence TTFIVRRLFH…SSPHSPLPSN (580 aa). One can recognise a Protein kinase domain in the interval 593-1076; the sequence is FEPIQCMGRG…AASIIENAIF (484 aa). ATP is bound at residue 599-607; sequence MGRGGFGVV. Tyrosine 619 is modified (phosphotyrosine; by autocatalysis). Lysine 622 is a binding site for ATP. An insert loop region spans residues 647-887; that stretch reads EHPGIVRYFN…SPKVYLYIQM (241 aa). Serine 715 carries the phosphoserine modification. Threonine 802 carries the phosphothreonine modification. Disordered stretches follow at residues 807–832 and 841–860; these read VFEDSGCDNASSKEEPRMNQPPVGNH and RHSGSKSSEPTVSVSPSRPT. The segment covering 845-860 has biased composition (polar residues); the sequence is SKSSEPTVSVSPSRPT. The Proton acceptor role is filled by aspartate 936. The residue at position 981 (threonine 981) is a Phosphothreonine. The tract at residues 1087-1115 is disordered; sequence LRQRSRSMSSPGAKHSRHSSSPHSPLPSN. Serine 1093 is modified (phosphoserine).

The protein belongs to the protein kinase superfamily. Ser/Thr protein kinase family. GCN2 subfamily. In terms of assembly, forms dimers with HSPA5/BIP in resting cells. Homotetramerizes in response to endoplasmic reticulum (ER) stress, leading to its activation. Interacts with HSP90B1/GRP94. Interacts with DNAJC3; inhibiting EIF2AK3/PERK activity. Interacts with ATAD3A; ATAD3A and EIF2S1/eIF-2-alpha occupy a common binding site within the cytoplasmic loop of EIF2AK3/PERK, leading to prevent EIF2AK3/PERK association with its substrate EIF2S1/eIF-2-alpha. Interacts with MFN2. Interacts with TMEM33. Interacts with PDIA6. Interacts with LACC1. In terms of processing, oligomerization of the N-terminal ER luminal domain by ER stress promotes EIF2AK3/PERK trans-autophosphorylation of the C-terminal cytoplasmic kinase domain at multiple residues including Thr-981 on the kinase activation loop. Autophosphorylated at Tyr-619 following endoplasmic reticulum stress, leading to activate its activity. Dephosphorylated at Tyr-619 by PTPN1/PTP1B, leading to inactivate its enzyme activity. Phosphorylation at Thr-802 by AKT (AKT1, AKT2 and/or AKT3) inactivates EIF2AK3/PERK. Post-translationally, ADP-ribosylated by PARP16 upon ER stress, which increases kinase activity.

Its subcellular location is the endoplasmic reticulum membrane. The enzyme catalyses L-seryl-[protein] + ATP = O-phospho-L-seryl-[protein] + ADP + H(+). It carries out the reaction L-threonyl-[protein] + ATP = O-phospho-L-threonyl-[protein] + ADP + H(+). It catalyses the reaction L-tyrosyl-[protein] + ATP = O-phospho-L-tyrosyl-[protein] + ADP + H(+). Inhibited by HSPA5/BIP in absence of stress. Perturbation in protein folding in the endoplasmic reticulum (ER) promotes reversible dissociation from HSPA5/BIP and oligomerization, resulting in trans-autophosphorylation and kinase activity induction. Inactivated following phosphorylation at Thr-802 by AKT (AKT1, AKT2 and/or AKT3). Inhibited by ATAD3A at mitochondria-endoplasmic reticulum contact sites, providing a safe haven for mitochondrial protein translation during ER stress. Metabolic-stress sensing protein kinase that phosphorylates the alpha subunit of eukaryotic translation initiation factor 2 (EIF2S1/eIF-2-alpha) in response to various stress, such as unfolded protein response (UPR). Key effector of the integrated stress response (ISR) to unfolded proteins: EIF2AK3/PERK specifically recognizes and binds misfolded proteins, leading to its activation and EIF2S1/eIF-2-alpha phosphorylation. EIF2S1/eIF-2-alpha phosphorylation in response to stress converts EIF2S1/eIF-2-alpha in a global protein synthesis inhibitor, leading to a global attenuation of cap-dependent translation, while concomitantly initiating the preferential translation of ISR-specific mRNAs, such as the transcriptional activators ATF4 and QRICH1, and hence allowing ATF4- and QRICH1-mediated reprogramming. The EIF2AK3/PERK-mediated unfolded protein response increases mitochondrial oxidative phosphorylation by promoting ATF4-mediated expression of COX7A2L/SCAF1, thereby increasing formation of respiratory chain supercomplexes. In contrast to most subcellular compartments, mitochondria are protected from the EIF2AK3/PERK-mediated unfolded protein response due to EIF2AK3/PERK inhibition by ATAD3A at mitochondria-endoplasmic reticulum contact sites. In addition to EIF2S1/eIF-2-alpha, also phosphorylates NFE2L2/NRF2 in response to stress, promoting release of NFE2L2/NRF2 from the BCR(KEAP1) complex, leading to nuclear accumulation and activation of NFE2L2/NRF2. Serves as a critical effector of unfolded protein response (UPR)-induced G1 growth arrest due to the loss of cyclin-D1 (CCND1). Involved in control of mitochondrial morphology and function. In Bos taurus (Bovine), this protein is Eukaryotic translation initiation factor 2-alpha kinase 3.